The chain runs to 192 residues: Ion-translocating oxidoreductase complex subunit A (192 aa).

6 helical membrane-spanning segments follow: residues 5–25 (LLLL…FLGL), 39–59 (IGMS…SYLV), 65–85 (LPFD…AVVV), 102–122 (ALGI…VALL), 134–154 (AIYG…FSAM), and 171–191 (AIAM…TGLV).

Belongs to the NqrDE/RnfAE family. In terms of assembly, the complex is composed of six subunits: RnfA, RnfB, RnfC, RnfD, RnfE and RnfG.

It localises to the cell inner membrane. In terms of biological role, part of a membrane-bound complex that couples electron transfer with translocation of ions across the membrane. The chain is Ion-translocating oxidoreductase complex subunit A from Shewanella putrefaciens (strain CN-32 / ATCC BAA-453).